The following is a 353-amino-acid chain: Guanine nucleotide-binding protein G(q) subunit alpha (353 aa).

Residues Cys3 and Cys4 are each lipidated (S-palmitoyl cysteine). Residues 32-353 enclose the G-alpha domain; the sequence is RELKLLLLGT…QLNLKEYNLV (322 aa). The segment at 35-48 is G1 motif; that stretch reads KLLLLGTGESGKST. GTP is bound by residues 40–47, 174–180, 199–203, 268–271, and Ala325; these read GTGESGKS, LRVRAPT, DVGGQ, and NKKD. 2 residues coordinate Mg(2+): Ser47 and Thr180. The segment at 172–180 is G2 motif; the sequence is DILRVRAPT. Residues 195-204 are G3 motif; the sequence is FRMVDVGGQR. The tract at residues 264–271 is G4 motif; that stretch reads ILFLNKKD. The tract at residues 323–328 is G5 motif; that stretch reads TCATDT.

It belongs to the G-alpha family. G(q) subfamily. As to quaternary structure, g proteins are composed of 3 units; alpha, beta and gamma. The alpha chain contains the guanine nucleotide binding site.

In terms of biological role, guanine nucleotide-binding proteins (G proteins) are involved as modulators or transducers in various transmembrane signaling systems. The chain is Guanine nucleotide-binding protein G(q) subunit alpha from Homarus americanus (American lobster).